Here is a 243-residue protein sequence, read N- to C-terminus: Ribosomal RNA small subunit methyltransferase J (243 aa).

S-adenosyl-L-methionine contacts are provided by residues 112-113 (ER) and Asp-164.

The protein belongs to the methyltransferase superfamily. RsmJ family.

The protein resides in the cytoplasm. It carries out the reaction guanosine(1516) in 16S rRNA + S-adenosyl-L-methionine = N(2)-methylguanosine(1516) in 16S rRNA + S-adenosyl-L-homocysteine + H(+). Specifically methylates the guanosine in position 1516 of 16S rRNA. The polypeptide is Ribosomal RNA small subunit methyltransferase J (Legionella pneumophila (strain Paris)).